The chain runs to 429 residues: Ribosomal RNA small subunit methyltransferase B (429 aa).

S-adenosyl-L-methionine-binding positions include 254-260 (CAAPGGK), D277, D303, and D322. C375 serves as the catalytic Nucleophile. Residues 397–419 (ALSETGTPDQPGQQNLPGGEEGD) form a disordered region. Residues 400–412 (ETGTPDQPGQQNL) are compositionally biased toward polar residues.

It belongs to the class I-like SAM-binding methyltransferase superfamily. RsmB/NOP family.

It is found in the cytoplasm. The catalysed reaction is cytidine(967) in 16S rRNA + S-adenosyl-L-methionine = 5-methylcytidine(967) in 16S rRNA + S-adenosyl-L-homocysteine + H(+). Specifically methylates the cytosine at position 967 (m5C967) of 16S rRNA. The sequence is that of Ribosomal RNA small subunit methyltransferase B from Salmonella newport (strain SL254).